The chain runs to 258 residues: Imidazole glycerol phosphate synthase subunit HisF (258 aa).

Residues aspartate 12 and aspartate 131 contribute to the active site.

It belongs to the HisA/HisF family. Heterodimer of HisH and HisF.

The protein localises to the cytoplasm. It catalyses the reaction 5-[(5-phospho-1-deoxy-D-ribulos-1-ylimino)methylamino]-1-(5-phospho-beta-D-ribosyl)imidazole-4-carboxamide + L-glutamine = D-erythro-1-(imidazol-4-yl)glycerol 3-phosphate + 5-amino-1-(5-phospho-beta-D-ribosyl)imidazole-4-carboxamide + L-glutamate + H(+). It participates in amino-acid biosynthesis; L-histidine biosynthesis; L-histidine from 5-phospho-alpha-D-ribose 1-diphosphate: step 5/9. Its function is as follows. IGPS catalyzes the conversion of PRFAR and glutamine to IGP, AICAR and glutamate. The HisF subunit catalyzes the cyclization activity that produces IGP and AICAR from PRFAR using the ammonia provided by the HisH subunit. This Nitrosomonas eutropha (strain DSM 101675 / C91 / Nm57) protein is Imidazole glycerol phosphate synthase subunit HisF.